Reading from the N-terminus, the 604-residue chain is Threonine--tRNA ligase (604 aa).

The tract at residues 197 to 499 is catalytic; the sequence is DHRKLGRELG…LIEEYAGDFP (303 aa). Residues Cys296, His347, and His476 each contribute to the Zn(2+) site.

Belongs to the class-II aminoacyl-tRNA synthetase family. As to quaternary structure, homodimer. It depends on Zn(2+) as a cofactor.

It localises to the cytoplasm. It catalyses the reaction tRNA(Thr) + L-threonine + ATP = L-threonyl-tRNA(Thr) + AMP + diphosphate + H(+). Its function is as follows. Catalyzes the attachment of threonine to tRNA(Thr) in a two-step reaction: L-threonine is first activated by ATP to form Thr-AMP and then transferred to the acceptor end of tRNA(Thr). Also edits incorrectly charged L-seryl-tRNA(Thr). The chain is Threonine--tRNA ligase from Synechococcus elongatus (strain ATCC 33912 / PCC 7942 / FACHB-805) (Anacystis nidulans R2).